A 398-amino-acid polypeptide reads, in one-letter code: Enoyl-[acyl-carrier-protein] reductase [NADH] (398 aa).

Residues 48-53, 74-75, 111-112, and 139-140 contribute to the NAD(+) site; these read GSSTGY, FE, DA, and LA. Tyr225 serves as a coordination point for substrate. Residue Tyr235 is the Proton donor of the active site. NAD(+)-binding positions include Lys244 and 273–275; that span reads VVT.

This sequence belongs to the TER reductase family. As to quaternary structure, monomer.

The catalysed reaction is a 2,3-saturated acyl-[ACP] + NAD(+) = a (2E)-enoyl-[ACP] + NADH + H(+). Its pathway is lipid metabolism; fatty acid biosynthesis. Its function is as follows. Involved in the final reduction of the elongation cycle of fatty acid synthesis (FAS II). Catalyzes the reduction of a carbon-carbon double bond in an enoyl moiety that is covalently linked to an acyl carrier protein (ACP). This chain is Enoyl-[acyl-carrier-protein] reductase [NADH], found in Pseudomonas aeruginosa (strain UCBPP-PA14).